An 82-amino-acid chain; its full sequence is ATP synthase subunit c, chloroplastic (82 aa).

Transmembrane regions (helical) follow at residues 7 to 27 (GASV…PGIG) and 57 to 77 (LAFM…LLFA).

Belongs to the ATPase C chain family. As to quaternary structure, F-type ATPases have 2 components, F(1) - the catalytic core - and F(0) - the membrane proton channel. F(1) has five subunits: alpha(3), beta(3), gamma(1), delta(1), epsilon(1). F(0) has four main subunits: a(1), b(1), b'(1) and c(10-14). The alpha and beta chains form an alternating ring which encloses part of the gamma chain. F(1) is attached to F(0) by a central stalk formed by the gamma and epsilon chains, while a peripheral stalk is formed by the delta, b and b' chains.

The protein localises to the plastid. It localises to the chloroplast thylakoid membrane. Its function is as follows. F(1)F(0) ATP synthase produces ATP from ADP in the presence of a proton or sodium gradient. F-type ATPases consist of two structural domains, F(1) containing the extramembraneous catalytic core and F(0) containing the membrane proton channel, linked together by a central stalk and a peripheral stalk. During catalysis, ATP synthesis in the catalytic domain of F(1) is coupled via a rotary mechanism of the central stalk subunits to proton translocation. Key component of the F(0) channel; it plays a direct role in translocation across the membrane. A homomeric c-ring of between 10-14 subunits forms the central stalk rotor element with the F(1) delta and epsilon subunits. This is ATP synthase subunit c, chloroplastic from Emiliania huxleyi (Coccolithophore).